The following is a 277-amino-acid chain: Putative phosphoenolpyruvate synthase regulatory protein (277 aa).

157 to 164 lines the ADP pocket; that stretch reads GVSRSGKT.

Belongs to the pyruvate, phosphate/water dikinase regulatory protein family. PSRP subfamily.

The catalysed reaction is [pyruvate, water dikinase] + ADP = [pyruvate, water dikinase]-phosphate + AMP + H(+). It catalyses the reaction [pyruvate, water dikinase]-phosphate + phosphate + H(+) = [pyruvate, water dikinase] + diphosphate. Its function is as follows. Bifunctional serine/threonine kinase and phosphorylase involved in the regulation of the phosphoenolpyruvate synthase (PEPS) by catalyzing its phosphorylation/dephosphorylation. The chain is Putative phosphoenolpyruvate synthase regulatory protein from Vibrio atlanticus (strain LGP32) (Vibrio splendidus (strain Mel32)).